The chain runs to 456 residues: MSALHLYNSLSRQKEPFHPITPNHVMMYVCGMTVYDFCHIGHARVMVVFDTIARHLRASGYQLTYVRNITDIDDKIIRRAAENNEPIQALTQRFINAMHEDEAALGCLPPSIEPKATEYVAEMIAMIGELIAQNHAYIADNGDVYYSVRSFDEYGKLANRRLEDLRAGERIAINEAKNDPLDFVLWKKAKTGEPSWESPWGAGRPGWHIECSVMSRHQLGDHFDIHGGGMDLKFPHHECEIAQSEPVCGGKHVNYWLHNGFINIDNEKMSKSLGNFFTVRDVLKNYAGEVIRFFMLQSHYRGPVNYSDAALEEAKRGLQRLYTALETAPTTGGAILLPYQERFVAAMDDDFNTPQAIAVLFELAKMLNKAAAAEAADIAFTLRTLAARLGLLTGDAKTLFQQKGALSAAEIEAEIARRQAAKAAKDYATADSIREKLSALGIELKDSATGTQWYYR.

Cysteine 30 serves as a coordination point for Zn(2+). Residues 32 to 42 (MTVYDFCHIGH) carry the 'HIGH' region motif. Residues cysteine 211, histidine 236, and glutamate 240 each contribute to the Zn(2+) site. Residues 268–272 (KMSKS) carry the 'KMSKS' region motif. Position 271 (lysine 271) interacts with ATP.

It belongs to the class-I aminoacyl-tRNA synthetase family. As to quaternary structure, monomer. Zn(2+) is required as a cofactor.

It is found in the cytoplasm. It catalyses the reaction tRNA(Cys) + L-cysteine + ATP = L-cysteinyl-tRNA(Cys) + AMP + diphosphate. This Dichelobacter nodosus (strain VCS1703A) protein is Cysteine--tRNA ligase.